The sequence spans 232 residues: Large ribosomal subunit protein uL1 (232 aa).

The protein belongs to the universal ribosomal protein uL1 family. In terms of assembly, part of the 50S ribosomal subunit.

Binds directly to 23S rRNA. The L1 stalk is quite mobile in the ribosome, and is involved in E site tRNA release. Functionally, protein L1 is also a translational repressor protein, it controls the translation of the L11 operon by binding to its mRNA. This is Large ribosomal subunit protein uL1 from Alkaliphilus metalliredigens (strain QYMF).